Consider the following 312-residue polypeptide: Protein YIPF2 (312 aa).

Ala-2 carries the N-acetylalanine modification. At 2–121 (AAADELAFHE…LRNRPDLYGP (120 aa)) the chain is on the cytoplasmic side. A helical membrane pass occupies residues 122–142 (FWICATLAFVLAVTGNLTLVL). Topologically, residues 143-160 (AQRRDPSIHYSPQFHKVT) are lumenal. Residues 161–181 (IAGITIYCYAWLVPLALWGFL) traverse the membrane as a helical segment. At 182-193 (RWRQGTRERMGL) the chain is on the cytoplasmic side. The chain crosses the membrane as a helical span at residues 194–216 (YTFLETVCVYGYSLFVFIPTVVL). At 217 to 228 (WLIPVQWIQWLF) the chain is on the lumenal side. Residues 229-249 (GALGLALSAAGLVFTLWPVVR) traverse the membrane as a helical segment. Residues 250–253 (EDTR) lie on the Cytoplasmic side of the membrane. The helical transmembrane segment at 254-274 (LVAAALLSTVVLLHALLALGC) threads the bilayer. Over 275 to 312 (KLYFFQPLPLDHVVPAPQATPPSPNVLLPSSIQPMTTS) the chain is Lumenal.

This sequence belongs to the YIP1 family. In terms of assembly, interacts with YIPF6; this interaction may stabilize YIPF2. May also form a ternary complex with YIPF1 and YIPF6.

The protein localises to the golgi apparatus. It localises to the cis-Golgi network membrane. It is found in the trans-Golgi network membrane. The protein resides in the late endosome membrane. This chain is Protein YIPF2 (Yipf2), found in Mus musculus (Mouse).